Consider the following 611-residue polypeptide: DNA mismatch repair protein MutL (611 aa).

Belongs to the DNA mismatch repair MutL/HexB family.

In terms of biological role, this protein is involved in the repair of mismatches in DNA. It is required for dam-dependent methyl-directed DNA mismatch repair. May act as a 'molecular matchmaker', a protein that promotes the formation of a stable complex between two or more DNA-binding proteins in an ATP-dependent manner without itself being part of a final effector complex. The polypeptide is DNA mismatch repair protein MutL (Borreliella afzelii (strain PKo) (Borrelia afzelii)).